The sequence spans 308 residues: Elongation factor Ts (308 aa).

The involved in Mg(2+) ion dislocation from EF-Tu stretch occupies residues 80–83 (TDFV).

Belongs to the EF-Ts family.

It localises to the cytoplasm. Its function is as follows. Associates with the EF-Tu.GDP complex and induces the exchange of GDP to GTP. It remains bound to the aminoacyl-tRNA.EF-Tu.GTP complex up to the GTP hydrolysis stage on the ribosome. This is Elongation factor Ts from Rhizobium johnstonii (strain DSM 114642 / LMG 32736 / 3841) (Rhizobium leguminosarum bv. viciae).